Here is a 346-residue protein sequence, read N- to C-terminus: Phosphate acyltransferase (346 aa).

It belongs to the PlsX family. As to quaternary structure, homodimer. Probably interacts with PlsY.

It localises to the cytoplasm. The enzyme catalyses a fatty acyl-[ACP] + phosphate = an acyl phosphate + holo-[ACP]. The protein operates within lipid metabolism; phospholipid metabolism. Catalyzes the reversible formation of acyl-phosphate (acyl-PO(4)) from acyl-[acyl-carrier-protein] (acyl-ACP). This enzyme utilizes acyl-ACP as fatty acyl donor, but not acyl-CoA. This chain is Phosphate acyltransferase, found in Crocosphaera subtropica (strain ATCC 51142 / BH68) (Cyanothece sp. (strain ATCC 51142)).